Reading from the N-terminus, the 350-residue chain is Histidinol-phosphate aminotransferase (350 aa).

Lysine 210 bears the N6-(pyridoxal phosphate)lysine mark.

This sequence belongs to the class-II pyridoxal-phosphate-dependent aminotransferase family. Histidinol-phosphate aminotransferase subfamily. In terms of assembly, homodimer. The cofactor is pyridoxal 5'-phosphate.

It catalyses the reaction L-histidinol phosphate + 2-oxoglutarate = 3-(imidazol-4-yl)-2-oxopropyl phosphate + L-glutamate. It functions in the pathway amino-acid biosynthesis; L-histidine biosynthesis; L-histidine from 5-phospho-alpha-D-ribose 1-diphosphate: step 7/9. This chain is Histidinol-phosphate aminotransferase, found in Pseudomonas syringae pv. syringae (strain B728a).